The primary structure comprises 214 residues: Adenylate kinase (214 aa).

10-15 serves as a coordination point for ATP; it reads GAGKGT. The segment at 30-59 is NMP; the sequence is STGDILRAAVKDMTPMGGKAKSFMDAGALV. AMP is bound by residues threonine 31, arginine 36, 57–59, 85–88, and glutamine 92; these read ALV and GFPR. The interval 126–163 is LID; it reads GRRTCRNCGKGFHVSFDPPKSSGICDECSGELYQRDDD. Arginine 127 provides a ligand contact to ATP. Zn(2+) contacts are provided by cysteine 130, cysteine 133, cysteine 150, and cysteine 153. AMP-binding residues include arginine 160 and arginine 171. Residue glycine 199 coordinates ATP.

This sequence belongs to the adenylate kinase family. Monomer.

It localises to the cytoplasm. The catalysed reaction is AMP + ATP = 2 ADP. The protein operates within purine metabolism; AMP biosynthesis via salvage pathway; AMP from ADP: step 1/1. Functionally, catalyzes the reversible transfer of the terminal phosphate group between ATP and AMP. Plays an important role in cellular energy homeostasis and in adenine nucleotide metabolism. This chain is Adenylate kinase, found in Geotalea daltonii (strain DSM 22248 / JCM 15807 / FRC-32) (Geobacter daltonii).